The chain runs to 138 residues: Small ribosomal subunit protein uS11c (138 aa).

The segment at 1-22 (MAKAIPKISSRRNGRIGSRKGA) is disordered. The span at 9–22 (SSRRNGRIGSRKGA) shows a compositional bias: basic residues.

This sequence belongs to the universal ribosomal protein uS11 family. In terms of assembly, part of the 30S ribosomal subunit.

The protein localises to the plastid. Its subcellular location is the chloroplast. The protein is Small ribosomal subunit protein uS11c of Nicotiana tabacum (Common tobacco).